The following is a 112-amino-acid chain: MRVAITEGPSPCTALIRFQPKSFITFYKHQTFFTDMHYNTFIAYRFFSSASCRCDLRPDNQSLHWLATNNPLSIPETAAVHVLPRQAWRTLMRPEENGKNLFGDIAPAAGPL.

The protein is Putative protein p12 (12) of Escherichia coli (Bacteriophage APSE-1).